The sequence spans 744 residues: Collagen alpha-1(VIII) chain (744 aa).

The signal sequence occupies residues 1–27 (MAVLPGPLQLLGVLLTISLSSIRLIQA). The nonhelical region (NC2) stretch occupies residues 29-117 (AYYGIKPLPP…GKEIPLASLR (89 aa)). Disordered stretches follow at residues 115-393 (SLRG…GEPG) and 459-589 (GPKG…PDMG). The segment at 118-571 (GEQGPRGEPG…PGPPGPPGPP (454 aa)) is triple-helical region (COL1). Residues 128–137 (PRGPPGPPGL) show a composition bias toward pro residues. The segment covering 168-178 (KPGAMGMPGAK) has biased composition (low complexity). Composition is skewed to gly residues over residues 203-217 (GLPG…GLPG) and 328-337 (GFPGGKGEQG). Low complexity-rich tracts occupy residues 466–496 (QKGV…LQGP) and 538–556 (AGLH…QGQP). A compositionally biased stretch (pro residues) spans 558-581 (LPGPPGPPGPPGPPAVMPPTPPPQ). The interval 572 to 744 (AVMPPTPPPQ…SFSGYLLYPM (173 aa)) is nonhelical region (NC1). One can recognise a C1q domain in the interval 611 to 744 (PAYEMPAFTA…SFSGYLLYPM (134 aa)).

Homotrimers, or heterotrimers in association with alpha 2(VIII) type collagens. Four homotrimers can form a tetrahedron stabilized by central interacting C-terminal NC1 trimers. Post-translationally, prolines at the third position of the tripeptide repeating unit (G-X-Y) are hydroxylated in some or all of the chains. Proteolytically cleaved by neutrophil elastase, in vitro. Proteolytic processing produces the C-terminal NC1 domain fragment, vastatin. Expressed primarily in the subendothelium of large blood vessels. Also expressed in arterioles and venules in muscle, heart, kidney, spleen, umbilical cord, liver and lung and is also found in connective tissue layers around hair follicles, around nerve bundles in muscle, in the dura of the optic nerve, in cornea and sclera, and in the perichondrium of cartilaginous tissues. In the kidney, expressed in mesangial cells, glomerular endothelial cells, and tubular epithelial cells. Also expressed in mast cells, and in astrocytes during the repair process. Expressed in Descemet's membrane. Specifically expressed in peritoneal fibroblasts and mesothelial cells.

The protein resides in the secreted. The protein localises to the extracellular space. It localises to the extracellular matrix. It is found in the basement membrane. Macromolecular component of the subendothelium. Major component of the Descemet's membrane (basement membrane) of corneal endothelial cells. Also a component of the endothelia of blood vessels. Necessary for migration and proliferation of vascular smooth muscle cells and thus, has a potential role in the maintenance of vessel wall integrity and structure, in particular in atherogenesis. Functionally, vastatin, the C-terminal fragment comprising the NC1 domain, inhibits aortic endothelial cell proliferation and causes cell apoptosis. The sequence is that of Collagen alpha-1(VIII) chain (COL8A1) from Homo sapiens (Human).